We begin with the raw amino-acid sequence, 304 residues long: Developmental pluripotency-associated protein 4 (304 aa).

The segment covering 1–11 (MLRGSASSTSM) has biased composition (polar residues). Disordered regions lie at residues 1 to 84 (MLRG…IPPL) and 147 to 176 (KKLK…VGEP). A compositionally biased stretch (basic and acidic residues) spans 12–29 (EKAKGKEWTSTEKSREED). Thr-215 carries the post-translational modification Phosphothreonine. Residues Ser-221 and Ser-226 each carry the phosphoserine modification.

In terms of assembly, interacts with DPPA2. Interacts with PCGF1.

Its subcellular location is the nucleus. Its function is as follows. May be involved in the maintenance of active epigenetic status of target genes. May inhibit differentiation of embryonic cells into a primitive ectoderm lineage. In Homo sapiens (Human), this protein is Developmental pluripotency-associated protein 4 (DPPA4).